The chain runs to 214 residues: CASP-like protein 3A1 (214 aa).

Over 1–49 (MTNGQKIEVAVQLPESKVAATENNETMSGPLVVGGGVAKPFGRKADVMH) the chain is Cytoplasmic. A helical membrane pass occupies residues 50 to 70 (VILRLLCTITSVTAVSFMVTA). Topologically, residues 71-96 (HQSSTVSIYGFMLPVRSKWSFSHSFE) are extracellular. A helical transmembrane segment spans residues 97 to 117 (YLVGVSAAVAAHSLLQLLISM). Topologically, residues 118–132 (SRLLRKSPVIPSRSH) are cytoplasmic. A helical transmembrane segment spans residues 133 to 153 (AWLIFAGDQVFAYAMISAGAA). Over 154-182 (ASGVTNLNRTGIQHTALPNFCKPLNYFCN) the chain is Extracellular. Asn161 carries an N-linked (GlcNAc...) asparagine glycan. The helical transmembrane segment at 183-203 (HVAVSIAFAFISCLLLAALAV) threads the bilayer. Topologically, residues 204 to 214 (QEVIWLSKSKY) are cytoplasmic.

Belongs to the Casparian strip membrane proteins (CASP) family. As to quaternary structure, homodimer and heterodimers.

The protein resides in the cell membrane. The sequence is that of CASP-like protein 3A1 from Ricinus communis (Castor bean).